A 52-amino-acid polypeptide reads, in one-letter code: U-scutigerotoxin(01)-Tl1a (52 aa).

The signal sequence occupies residues 1-25 (MLAKAMSLLMMFLLVLVIGSVMVSA).

It belongs to the scutigerotoxin-01 family. Contains 1 disulfide bond. In terms of tissue distribution, expressed by the venom gland.

The protein resides in the secreted. The chain is U-scutigerotoxin(01)-Tl1a from Thereuopoda longicornis (Long-legged centipede).